Reading from the N-terminus, the 451-residue chain is GTPase Der (451 aa).

2 EngA-type G domains span residues 5-170 (PVVA…VEPE) and 186-359 (IKLA…AAAF). GTP-binding positions include 11 to 18 (GRPNVGKS), 58 to 62 (DTGGF), 122 to 125 (NKAE), 192 to 199 (GRPNVGKS), 239 to 243 (DTAGL), and 304 to 307 (NKWD). The KH-like domain occupies 360–444 (AKLSTPKLTR…PLRIEFKSSR (85 aa)).

The protein belongs to the TRAFAC class TrmE-Era-EngA-EngB-Septin-like GTPase superfamily. EngA (Der) GTPase family. As to quaternary structure, associates with the 50S ribosomal subunit.

Functionally, GTPase that plays an essential role in the late steps of ribosome biogenesis. This is GTPase Der from Bordetella petrii (strain ATCC BAA-461 / DSM 12804 / CCUG 43448).